The chain runs to 235 residues: Endonuclease V (235 aa).

Positions 47 and 117 each coordinate Mg(2+).

Belongs to the endonuclease V family. Requires Mg(2+) as cofactor.

The protein localises to the cytoplasm. It carries out the reaction Endonucleolytic cleavage at apurinic or apyrimidinic sites to products with a 5'-phosphate.. DNA repair enzyme involved in the repair of deaminated bases. Selectively cleaves double-stranded DNA at the second phosphodiester bond 3' to a deoxyinosine leaving behind the intact lesion on the nicked DNA. This Protochlamydia amoebophila (strain UWE25) protein is Endonuclease V.